The chain runs to 883 residues: Phosphoenolpyruvate carboxylase (883 aa).

Active-site residues include histidine 138 and lysine 546.

It belongs to the PEPCase type 1 family. Mg(2+) serves as cofactor.

It carries out the reaction oxaloacetate + phosphate = phosphoenolpyruvate + hydrogencarbonate. Its function is as follows. Forms oxaloacetate, a four-carbon dicarboxylic acid source for the tricarboxylic acid cycle. This Shigella dysenteriae serotype 1 (strain Sd197) protein is Phosphoenolpyruvate carboxylase.